The primary structure comprises 119 residues: MDDSKIVAGKVKKPGKRGRKPAKIDLKAKLERSRQSARECRARKKLRYQYLEELVSSKERAICALREELDMYKQWCLAMDQGKIPSEIKALLTGDEQKTPQSCSNKTTKNSKYSSSSGI.

Residues 1–23 form a disordered region; the sequence is MDDSKIVAGKVKKPGKRGRKPAK. The segment covering 10–21 has biased composition (basic residues); sequence KVKKPGKRGRKP. Residues 23 to 86 enclose the bZIP domain; it reads KIDLKAKLER…LAMDQGKIPS (64 aa). The interval 29–60 is basic motif; it reads KLERSRQSARECRARKKLRYQYLEELVSSKER. A leucine-zipper region spans residues 62–69; the sequence is ICALREEL. The segment at 95–119 is disordered; it reads DEQKTPQSCSNKTTKNSKYSSSSGI. Residues 102–119 are compositionally biased toward low complexity; sequence SCSNKTTKNSKYSSSSGI.

Belongs to the bZIP family. ATF subfamily.

The protein resides in the nucleus. In terms of biological role, probable regulator of creb1 transcriptional activity which is involved in adipose cells differentiation. May also play a regulatory role in the cell cycle. This chain is cAMP-responsive element-binding protein-like 2 (crebl2), found in Danio rerio (Zebrafish).